The sequence spans 184 residues: ATP synthase subunit b, chloroplastic (184 aa).

A helical transmembrane segment spans residues 27-49; it reads LATNLINLSVVLGVLVFFGKGVL.

This sequence belongs to the ATPase B chain family. F-type ATPases have 2 components, F(1) - the catalytic core - and F(0) - the membrane proton channel. F(1) has five subunits: alpha(3), beta(3), gamma(1), delta(1), epsilon(1). F(0) has four main subunits: a(1), b(1), b'(1) and c(10-14). The alpha and beta chains form an alternating ring which encloses part of the gamma chain. F(1) is attached to F(0) by a central stalk formed by the gamma and epsilon chains, while a peripheral stalk is formed by the delta, b and b' chains.

The protein localises to the plastid. It is found in the chloroplast thylakoid membrane. Functionally, f(1)F(0) ATP synthase produces ATP from ADP in the presence of a proton or sodium gradient. F-type ATPases consist of two structural domains, F(1) containing the extramembraneous catalytic core and F(0) containing the membrane proton channel, linked together by a central stalk and a peripheral stalk. During catalysis, ATP synthesis in the catalytic domain of F(1) is coupled via a rotary mechanism of the central stalk subunits to proton translocation. Component of the F(0) channel, it forms part of the peripheral stalk, linking F(1) to F(0). This Cicer arietinum (Chickpea) protein is ATP synthase subunit b, chloroplastic.